The primary structure comprises 335 residues: Ornithine carbamoyltransferase (335 aa).

Carbamoyl phosphate contacts are provided by residues Ser-56–Thr-59, Gln-83, Arg-107, and His-134–Gln-137. Residues Asn-168, Asp-232, and Ser-236–Met-237 contribute to the L-ornithine site. Carbamoyl phosphate contacts are provided by residues Cys-274–Leu-275 and Arg-320.

It belongs to the aspartate/ornithine carbamoyltransferase superfamily. OTCase family.

The protein resides in the cytoplasm. It catalyses the reaction carbamoyl phosphate + L-ornithine = L-citrulline + phosphate + H(+). The protein operates within amino-acid biosynthesis; L-arginine biosynthesis; L-arginine from L-ornithine and carbamoyl phosphate: step 1/3. Functionally, reversibly catalyzes the transfer of the carbamoyl group from carbamoyl phosphate (CP) to the N(epsilon) atom of ornithine (ORN) to produce L-citrulline. The polypeptide is Ornithine carbamoyltransferase (Yersinia pestis bv. Antiqua (strain Nepal516)).